The chain runs to 110 residues: Small ribosomal subunit protein eS25 (110 aa).

The segment at 1-39 (MPPKAAGGKSKQIQASKAAAKGSSGGAGRKKWSKGRSRE) is disordered.

Belongs to the eukaryotic ribosomal protein eS25 family.

The sequence is that of Small ribosomal subunit protein eS25 (rps25) from Dictyostelium discoideum (Social amoeba).